The primary structure comprises 103 residues: Integration host factor subunit beta (103 aa).

The segment at 59-82 (RLGRNPKTGESVALPGKHVPHFKP) is disordered.

The protein belongs to the bacterial histone-like protein family. In terms of assembly, heterodimer of an alpha and a beta chain.

This protein is one of the two subunits of integration host factor, a specific DNA-binding protein that functions in genetic recombination as well as in transcriptional and translational control. This Xanthomonas oryzae pv. oryzae (strain MAFF 311018) protein is Integration host factor subunit beta.